A 64-amino-acid polypeptide reads, in one-letter code: uncharacterized protein (64 aa).

The interval 35–64 is disordered; the sequence is TIRKPPIEHAAGPLGSTSRAGHRSYGGVAS.

This is an uncharacterized protein from Mycobacterium tuberculosis (strain ATCC 25618 / H37Rv).